The following is a 443-amino-acid chain: UDP-N-acetylmuramate--L-alanine ligase (443 aa).

Residue 110–116 (GAHGKTS) participates in ATP binding.

The protein belongs to the MurCDEF family.

It localises to the cytoplasm. It carries out the reaction UDP-N-acetyl-alpha-D-muramate + L-alanine + ATP = UDP-N-acetyl-alpha-D-muramoyl-L-alanine + ADP + phosphate + H(+). It functions in the pathway cell wall biogenesis; peptidoglycan biosynthesis. Functionally, cell wall formation. This chain is UDP-N-acetylmuramate--L-alanine ligase, found in Lactococcus lactis subsp. cremoris (strain SK11).